The primary structure comprises 182 residues: ATP synthase subunit delta (182 aa).

This sequence belongs to the ATPase delta chain family. As to quaternary structure, F-type ATPases have 2 components, F(1) - the catalytic core - and F(0) - the membrane proton channel. F(1) has five subunits: alpha(3), beta(3), gamma(1), delta(1), epsilon(1). F(0) has three main subunits: a(1), b(2) and c(10-14). The alpha and beta chains form an alternating ring which encloses part of the gamma chain. F(1) is attached to F(0) by a central stalk formed by the gamma and epsilon chains, while a peripheral stalk is formed by the delta and b chains.

Its subcellular location is the cell inner membrane. Functionally, f(1)F(0) ATP synthase produces ATP from ADP in the presence of a proton or sodium gradient. F-type ATPases consist of two structural domains, F(1) containing the extramembraneous catalytic core and F(0) containing the membrane proton channel, linked together by a central stalk and a peripheral stalk. During catalysis, ATP synthesis in the catalytic domain of F(1) is coupled via a rotary mechanism of the central stalk subunits to proton translocation. In terms of biological role, this protein is part of the stalk that links CF(0) to CF(1). It either transmits conformational changes from CF(0) to CF(1) or is implicated in proton conduction. The protein is ATP synthase subunit delta of Bdellovibrio bacteriovorus (strain ATCC 15356 / DSM 50701 / NCIMB 9529 / HD100).